A 182-amino-acid polypeptide reads, in one-letter code: UPF0301 protein MCA0413 1 (182 aa).

The protein belongs to the UPF0301 (AlgH) family.

The polypeptide is UPF0301 protein MCA0413 1 (Methylococcus capsulatus (strain ATCC 33009 / NCIMB 11132 / Bath)).